The following is a 270-amino-acid chain: Probable septum site-determining protein MinC (270 aa).

The disordered stretch occupies residues 105 to 129; it reads DRRAPSSKAADEAPVQQAEPAAPAA. Over residues 116–129 the composition is skewed to low complexity; the sequence is EAPVQQAEPAAPAA.

This sequence belongs to the MinC family. Interacts with MinD and FtsZ.

Cell division inhibitor that blocks the formation of polar Z ring septums. Rapidly oscillates between the poles of the cell to destabilize FtsZ filaments that have formed before they mature into polar Z rings. Prevents FtsZ polymerization. The polypeptide is Probable septum site-determining protein MinC (Burkholderia pseudomallei (strain 668)).